The sequence spans 140 residues: Neuropeptide CCHamide-2 (140 aa).

The signal sequence occupies residues 1-22 (MAQMYLAVTIIALLAISHGVSA). A disulfide bridge links Cys26 with Cys33. His37 bears the Histidine amide mark. The propeptide occupies 41 to 140 (SGDTSAMDQL…PDDGYYIESL (100 aa)).

Expressed in corpora cardiaca (CC), corpora allata (CA), antennal lobe (AL) and gnathal ganglion (GNG) (at protein level). Expression detected in few animals (at protein level).

Its subcellular location is the secreted. In terms of biological role, ligand for the CCHamide-2 receptor CCHa2-R. The chain is Neuropeptide CCHamide-2 from Agrotis ipsilon (Black cutworm moth).